The primary structure comprises 599 residues: Putative clathrin assembly protein At1g03050 (599 aa).

Residues G26–K162 form the ENTH domain. 2 disordered regions span residues K332 to E382 and Q580 to Y599. Acidic residues-rich tracts occupy residues A341–D359 and E373–E382. A compositionally biased stretch (polar residues) spans L585 to Y599.

The protein resides in the membrane. It localises to the clathrin-coated pit. The protein localises to the golgi apparatus. Its subcellular location is the cytoplasmic vesicle. It is found in the clathrin-coated vesicle. The sequence is that of Putative clathrin assembly protein At1g03050 from Arabidopsis thaliana (Mouse-ear cress).